A 390-amino-acid polypeptide reads, in one-letter code: NADH-quinone oxidoreductase subunit D (390 aa).

Belongs to the complex I 49 kDa subunit family. As to quaternary structure, NDH-1 is composed of 14 different subunits. Subunits NuoB, C, D, E, F, and G constitute the peripheral sector of the complex.

It localises to the cell membrane. It catalyses the reaction a quinone + NADH + 5 H(+)(in) = a quinol + NAD(+) + 4 H(+)(out). NDH-1 shuttles electrons from NADH, via FMN and iron-sulfur (Fe-S) centers, to quinones in the respiratory chain. The immediate electron acceptor for the enzyme in this species is believed to be ubiquinone. Couples the redox reaction to proton translocation (for every two electrons transferred, four hydrogen ions are translocated across the cytoplasmic membrane), and thus conserves the redox energy in a proton gradient. The sequence is that of NADH-quinone oxidoreductase subunit D from Wolbachia sp. subsp. Brugia malayi (strain TRS).